The primary structure comprises 338 residues: Aspartate carbamoyltransferase catalytic subunit (338 aa).

Arginine 72 and threonine 73 together coordinate carbamoyl phosphate. An L-aspartate-binding site is contributed by lysine 100. Residues arginine 122, histidine 152, and glutamine 155 each coordinate carbamoyl phosphate. Residues arginine 186 and arginine 243 each contribute to the L-aspartate site. Carbamoyl phosphate is bound by residues glycine 284 and proline 285.

The protein belongs to the aspartate/ornithine carbamoyltransferase superfamily. ATCase family. In terms of assembly, heterododecamer (2C3:3R2) of six catalytic PyrB chains organized as two trimers (C3), and six regulatory PyrI chains organized as three dimers (R2).

The enzyme catalyses carbamoyl phosphate + L-aspartate = N-carbamoyl-L-aspartate + phosphate + H(+). It functions in the pathway pyrimidine metabolism; UMP biosynthesis via de novo pathway; (S)-dihydroorotate from bicarbonate: step 2/3. Its function is as follows. Catalyzes the condensation of carbamoyl phosphate and aspartate to form carbamoyl aspartate and inorganic phosphate, the committed step in the de novo pyrimidine nucleotide biosynthesis pathway. The polypeptide is Aspartate carbamoyltransferase catalytic subunit (Acinetobacter baumannii (strain AB307-0294)).